Consider the following 132-residue polypeptide: MALTLDIVTPEKRVLSVQVDEVRAPGVQGGFGVRLNHEPFMTALEPGRLTYVEGGREHHYAVGGGFLQVADNRVIVLADTAEAAGEIDVDRARKAFEDAQNRLLQLTEQDESHSAESARVRRAAARLTVAGR.

This sequence belongs to the ATPase epsilon chain family. In terms of assembly, F-type ATPases have 2 components, CF(1) - the catalytic core - and CF(0) - the membrane proton channel. CF(1) has five subunits: alpha(3), beta(3), gamma(1), delta(1), epsilon(1). CF(0) has three main subunits: a, b and c.

The protein resides in the cell inner membrane. In terms of biological role, produces ATP from ADP in the presence of a proton gradient across the membrane. The protein is ATP synthase epsilon chain of Anaeromyxobacter dehalogenans (strain 2CP-1 / ATCC BAA-258).